Consider the following 367-residue polypeptide: Probable outer membrane usher protein LpfC (367 aa).

The signal sequence occupies residues 1–30 (MSRKTVSRTFSSFSISVVAVAVASTFSAHA).

Belongs to the fimbrial export usher family.

Its subcellular location is the cell outer membrane. Its function is as follows. Part of the lpfABCC'DE fimbrial operon. LP fimbriae may participate in the interaction with eukaryotic cells by assisting in microcolony formation. Could be involved in the export and assembly of the fimbrial subunits across the outer membrane. This Escherichia coli O157:H7 protein is Probable outer membrane usher protein LpfC (lpfC).